The following is a 376-amino-acid chain: UPF0754 membrane protein SE_1527 (376 aa).

2 helical membrane passes run 4-24 (ILLVVFMIILGAIIGGVTNMI) and 356-376 (TLGFILGGIIGFFQGVIAIFV).

Belongs to the UPF0754 family.

It is found in the cell membrane. The polypeptide is UPF0754 membrane protein SE_1527 (Staphylococcus epidermidis (strain ATCC 12228 / FDA PCI 1200)).